The sequence spans 296 residues: Sperm-activating peptides (296 aa).

3 propeptides span residues 1–134 (MPPG…MYKK), 146–190 (MLSN…MILK), and 290–296 (EVEIKDW).

Its function is as follows. Causes stimulation of sperm respiration and motility through intracellular alkalinization, transient elevations of cAMP, cGMP and calcium levels in sperm cells, and transient activation and subsequent inactivation of the membrane form of guanylate cyclase. The polypeptide is Sperm-activating peptides (Strongylocentrotus purpuratus (Purple sea urchin)).